Consider the following 309-residue polypeptide: (S)-sulfolactate dehydrogenase (309 aa).

Residues 151-152, aspartate 171, 231-233, and aspartate 257 contribute to the NAD(+) site; these read GI and TAR. Arginine 233 is an active-site residue. The active site involves glutamate 262. Histidine 281 functions as the Proton donor in the catalytic mechanism. Residue 281-284 coordinates NAD(+); sequence HIAG.

The protein belongs to the D-isomer specific 2-hydroxyacid dehydrogenase family.

The enzyme catalyses (2S)-3-sulfolactate + NAD(+) = 3-sulfopyruvate + NADH + H(+). Its function is as follows. Dehydrogenase of the (R,S)-sulfolactate degradation pathway that only acts on the (S)-enantiomer of 3-sulfolactate. Together with ComC, provides a racemase system that converts (2S)-3-sulfolactate to (2R)-3-sulfolactate, which is degraded further by (2R)-sulfolactate sulfo-lyase. Specific for NAD. Also able to form sulfolactate from sulfopyruvate. This is (S)-sulfolactate dehydrogenase (slcC) from Chromohalobacter salexigens (strain ATCC BAA-138 / DSM 3043 / CIP 106854 / NCIMB 13768 / 1H11).